A 78-amino-acid chain; its full sequence is RNA-binding protein KhpA (78 aa).

One can recognise a KH domain in the interval 29 to 78; the sequence is TIIYELTVAKGDIGKIIGKEGRTIKAIRTLLVSVASRDNVKVSLEIMEER.

Belongs to the KhpA RNA-binding protein family.

It is found in the cytoplasm. A probable RNA-binding protein. The protein is RNA-binding protein KhpA of Chlamydia trachomatis serovar D (strain ATCC VR-885 / DSM 19411 / UW-3/Cx).